Consider the following 355-residue polypeptide: uncharacterized protein (355 aa).

The signal sequence occupies residues 1–21 (MQKKVLFNDIVFVCFPITDNG). 6 N-linked (GlcNAc...) asparagine; by host glycosylation sites follow: asparagine 20, asparagine 78, asparagine 87, asparagine 156, asparagine 159, and asparagine 274. Residues 22–331 (SIIISDIGYS…SSTSFFSRYG (310 aa)) lie on the Virion surface side of the membrane. The interval 288 to 317 (GSKSTPNGPNGPTPTPSNGPNGPTPVPGIP) is disordered. A compositionally biased stretch (pro residues) spans 296–317 (PNGPTPTPSNGPNGPTPVPGIP). Asparagine 320 carries an N-linked (GlcNAc...) asparagine; by host glycan. A helical membrane pass occupies residues 332 to 352 (LWIIIAIILLIVIISAVGIYF). The Intravirion segment spans residues 353-355 (YLR).

The protein localises to the host membrane. It is found in the virion. This is an uncharacterized protein from Acanthamoeba polyphaga mimivirus (APMV).